Consider the following 259-residue polypeptide: uncharacterized protein (259 aa).

The region spanning 4–248 (LQTTNLSKTY…SILDTLSVLG (245 aa)) is the ABC transporter domain. 42 to 49 (GPSGSGKT) contributes to the ATP binding site.

The protein belongs to the ABC transporter superfamily.

This is an uncharacterized protein from Bacillus subtilis (strain 168).